The sequence spans 322 residues: Gas vesicle protein L (322 aa).

The disordered stretch occupies residues 1 to 85; that stretch reads MTEQSSGSAT…SEQATVDWST (85 aa). A compositionally biased stretch (basic and acidic residues) spans 17-36; the sequence is ETAKQETGRKNEQPEERTVT. Residues 45 to 57 are compositionally biased toward polar residues; sequence INTTTAESETGSE. Positions 58–72 are enriched in basic and acidic residues; the sequence is QESKAGSEQESKAGS. Positions 73-85 are enriched in polar residues; sequence EQESEQATVDWST.

The protein belongs to the gas vesicle GvpF/GvpL family. In terms of assembly, gvpF to GvpM interact with each other in vitro, and may form multi-subunit complex(es). Interacts with GvpC, GvpN and GvpO.

The protein localises to the gas vesicle. In terms of biological role, proteins GvpF to GvpM might be involved in nucleating gas vesicle formation. A minor component of the gas vesicle. Gas vesicles are small, hollow, gas filled protein structures that are found in several microbial planktonic microorganisms. They allow positioning of halobacteria at the optimal depth for growth in the poorly aerated, shallow brine pools of their habitat. Expression of a 9.5 kb mc-vac DNA fragment containing 2 divergently transcribed regions (gvpD-gvpE-gvpF-gvpG-gvpH-gvpI-gvpJ-gvpK-gvpL-gvpM and gvpA-gvpC-gvpN-gvpO) allows H.volcanii to produce gas vesicles. This Haloferax mediterranei (strain ATCC 33500 / DSM 1411 / JCM 8866 / NBRC 14739 / NCIMB 2177 / R-4) (Halobacterium mediterranei) protein is Gas vesicle protein L.